The following is a 247-amino-acid chain: Large ribosomal subunit protein uL30 (247 aa).

An N-acetylmethionine modification is found at M1. Tandem repeats lie at residues 7-17, 18-29, 30-41, and 42-53. A 4 X 12 AA tandem repeats region spans residues 7-53; it reads KKKVPAVPETLKKKRRNFAELKIKRLRKKFAQKMLRKARRKLIYEKA. T16 is subject to Phosphothreonine. K123 is modified (N6-acetyllysine). N6-succinyllysine is present on K126. A Phosphotyrosine modification is found at Y138.

This sequence belongs to the universal ribosomal protein uL30 family. As to quaternary structure, component of the large ribosomal subunit. Homodimer. Interacts with DHX33.

It localises to the cytoplasm. Its function is as follows. Component of the large ribosomal subunit. The ribosome is a large ribonucleoprotein complex responsible for the synthesis of proteins in the cell. Binds to G-rich structures in 28S rRNA and in mRNAs. Plays a regulatory role in the translation apparatus; inhibits cell-free translation of mRNAs. The polypeptide is Large ribosomal subunit protein uL30 (RPL7) (Macaca fascicularis (Crab-eating macaque)).